We begin with the raw amino-acid sequence, 528 residues long: ATP synthase subunit alpha (528 aa).

ATP is bound at residue 169 to 176; the sequence is GDRQTGKT.

It belongs to the ATPase alpha/beta chains family. As to quaternary structure, F-type ATPases have 2 components, CF(1) - the catalytic core - and CF(0) - the membrane proton channel. CF(1) has five subunits: alpha(3), beta(3), gamma(1), delta(1), epsilon(1). CF(0) has three main subunits: a(1), b(2) and c(9-12). The alpha and beta chains form an alternating ring which encloses part of the gamma chain. CF(1) is attached to CF(0) by a central stalk formed by the gamma and epsilon chains, while a peripheral stalk is formed by the delta and b chains.

The protein resides in the cell membrane. The catalysed reaction is ATP + H2O + 4 H(+)(in) = ADP + phosphate + 5 H(+)(out). Functionally, produces ATP from ADP in the presence of a proton gradient across the membrane. The alpha chain is a regulatory subunit. This chain is ATP synthase subunit alpha, found in Mycoplasmopsis agalactiae (strain NCTC 10123 / CIP 59.7 / PG2) (Mycoplasma agalactiae).